The chain runs to 546 residues: Cation/calcium exchanger 5 (546 aa).

The next 13 helical transmembrane spans lie at 13-33 (ALCLTLISILIFFFLTTTTIP), 88-108 (NLFFSIPILSLLILLHFYILI), 134-154 (AVTLLALGNGAPDVFASVAAL), 163-183 (FGAILSAGTFVSAFVVGFVAI), 194-214 (SFVRDVLFYLIAALFLFYVYL), 218-238 (IFVWQAIGFVGFYIFFVGFVF), 323-343 (SANIVFCPFALLYTCNSFVQL), 356-376 (LPLWLVVLFMTSSLAFLHFTV), 388-408 (VIVVAFIMSVFWISTIAGELL), 423-445 (ALLGLTVLAWGNSVGDLVADVAV), 455-475 (MAGCFAGPMFNMLVGLGSALV), 492-512 (VGIVIAFVFLLLSLMGSLLVI), and 522-542 (FWGICLVGLYVAFTFVSLIIA).

The protein belongs to the Ca(2+):cation antiporter (CaCA) (TC 2.A.19) family. Cation/calcium exchanger (CCX) subfamily.

It is found in the cell membrane. In terms of biological role, membrane-localized H(+)-dependent K(+) and Na(+) transporter. The protein is Cation/calcium exchanger 5 (CCX5) of Arabidopsis thaliana (Mouse-ear cress).